The sequence spans 126 residues: Small ribosomal subunit protein eS6 (126 aa).

This sequence belongs to the eukaryotic ribosomal protein eS6 family.

The chain is Small ribosomal subunit protein eS6 from Nanoarchaeum equitans (strain Kin4-M).